A 382-amino-acid polypeptide reads, in one-letter code: Intermediate transcription factor 3 large subunit (382 aa).

This sequence belongs to the poxviruses A23 family. As to quaternary structure, heterodimer of a 45 kDa and a 32 kDa subunit.

In terms of biological role, acts with RNA polymerase to initiate transcription from intermediate gene promoters. The polypeptide is Intermediate transcription factor 3 large subunit (VITF3L) (Ectromelia virus (strain Moscow) (ECTV)).